Reading from the N-terminus, the 448-residue chain is 5-hydroxytryptamine receptor 7 (448 aa).

The Extracellular segment spans residues 1 to 86 (MMDVNSSGRP…INYGRVEKVV (86 aa)). Residues Asn5 and Asn69 are each glycosylated (N-linked (GlcNAc...) asparagine). The chain crosses the membrane as a helical span at residues 87–111 (IGSILTLITLLTIAGNCLVVISVCF). The Cytoplasmic segment spans residues 112–121 (VKKLRQPSNY). The helical transmembrane segment at 122–143 (LIVSLALADLSVAVAVMPFVSV) threads the bilayer. The Extracellular portion of the chain corresponds to 144–155 (TDLIGGKWIFGH). A helical membrane pass occupies residues 156-181 (FFCNVFIAMDVMCCTASIMTLCVISI). A disulfide bond links Cys158 and Cys234. Position 165 (Asp165) interacts with serotonin. Over 182–201 (DRYLGITRPLTYPVRQNGKC) the chain is Cytoplasmic. The helical transmembrane segment at 202–222 (MAKMILSVWLLSASITLPPLF) threads the bilayer. The Extracellular segment spans residues 223–240 (GWAQNVNDDKVCLISQDF). Residues 241-263 (GYTIYSTAVAFYIPMSVMLFMYY) form a helical membrane-spanning segment. At 264-329 (QIYKAARKSA…SIFKREQKAA (66 aa)) the chain is on the cytoplasmic side. A helical membrane pass occupies residues 330-355 (TTLGIIVGAFTVCWLPFFLLSTARPF). Topologically, residues 356–366 (ICGTSCSCIPL) are extracellular. A helical membrane pass occupies residues 367–390 (WVERTCLWLGYANSLINPFIYAFF). Over 391–448 (NRDLRTTYRSLLQCQYRNINRKLSAAGMHEALKLAERPERSEFVLQNSDHCGKKGHDT) the chain is Cytoplasmic. Residue Cys404 is the site of S-palmitoyl cysteine attachment.

Belongs to the G-protein coupled receptor 1 family. Thalamus, hypothalamus, and the hippocampal rudiments.

The protein resides in the cell membrane. Functionally, G-protein coupled receptor for 5-hydroxytryptamine (serotonin), a biogenic hormone that functions as a neurotransmitter, a hormone and a mitogen. Ligand binding causes a conformation change that triggers signaling via guanine nucleotide-binding proteins (G proteins) and modulates the activity of downstream effectors. HTR7 is coupled to G(s) G alpha proteins and mediates activation of adenylate cyclase activity. The chain is 5-hydroxytryptamine receptor 7 from Rattus norvegicus (Rat).